A 757-amino-acid chain; its full sequence is Serine/threonine-protein phosphatase with EF-hands 2 (757 aa).

Positions lysine 21 to asparagine 46 constitute an IQ domain. The catalytic stretch occupies residues alanine 128–lysine 544. The Mn(2+) site is built by aspartate 179, histidine 181, aspartate 208, and asparagine 240. Histidine 241 acts as the Proton donor in catalysis. Histidine 292 provides a ligand contact to Mn(2+). Residues cysteine 318–proline 349 are disordered. Residues arginine 321–asparagine 335 are compositionally biased toward basic and acidic residues. Histidine 492 contacts Mn(2+). 3 EF-hand domains span residues alanine 572 to leucine 607, arginine 656 to histidine 691, and isoleucine 696 to serine 731. Residues aspartate 585, aspartate 587, serine 589, aspartate 596, aspartate 669, aspartate 671, serine 673, glutamate 680, aspartate 709, asparagine 711, aspartate 713, histidine 715, and glutamate 720 each coordinate Ca(2+).

It belongs to the PPP phosphatase family. Mn(2+) serves as cofactor. Detected in retina, more specifically in photoreceptors.

The enzyme catalyses O-phospho-L-seryl-[protein] + H2O = L-seryl-[protein] + phosphate. It catalyses the reaction O-phospho-L-threonyl-[protein] + H2O = L-threonyl-[protein] + phosphate. Activated by calcium. May play a role in phototransduction. May dephosphorylate photoactivated rhodopsin. May function as a calcium sensing regulator of ionic currents, energy production or synaptic transmission. The protein is Serine/threonine-protein phosphatase with EF-hands 2 (Ppef2) of Mus musculus (Mouse).